The primary structure comprises 413 residues: Transposon Ty4-H Gag polyprotein (413 aa).

A coiled-coil region spans residues 39-115 (RKVSIKDEQV…IQLLETNENN (77 aa)). Residues 380-413 (RQQQLKSSAKRTKVLEQDTKKVKQSVQQQKTGNY) form a disordered region. Positions 403–413 (QSVQQQKTGNY) are enriched in low complexity.

Its function is as follows. Capsid protein (CA) is the structural component of the virus-like particle (VLP), forming the shell that encapsulates the retrotransposons dimeric RNA genome. This is Transposon Ty4-H Gag polyprotein (TY4A-H) from Saccharomyces cerevisiae (strain ATCC 204508 / S288c) (Baker's yeast).